The primary structure comprises 1701 residues: Merozoite surface protein 1 (1701 aa).

The N-terminal stretch at 1–19 (MKIIFFLCSFLFFIINTQC) is a signal peptide. Residues 89-100 (GSGGSVASGGSG) show a composition bias toward gly residues. The segment at 89–118 (GSGGSVASGGSGNSRRTNPSDNSSDSNTKT) is disordered. Positions 101 to 116 (NSRRTNPSDNSSDSNT) are enriched in low complexity. 2 N-linked (GlcNAc...) asparagine glycosylation sites follow: N110 and N239. The disordered stretch occupies residues 322–344 (DAENPTTGSKPNPLPENKKKEVE). Residues N470, N536, and N607 are each glycosylated (N-linked (GlcNAc...) asparagine). The tract at residues 704 to 739 (SETTEDGGHSTHTLSQSGETEVTEETEVTEETVGHT) is disordered. Over residues 724–733 (EVTEETEVTE) the composition is skewed to acidic residues. N-linked (GlcNAc...) asparagine glycans are attached at residues N802, N899, N919, N965, N991, N1089, and N1196. A compositionally biased stretch (low complexity) spans 889 to 927 (TGTSSTSSPGNTTVNTAQSATHSNSQNQQSNASSTNTQN). The interval 889–936 (TGTSSTSSPGNTTVNTAQSATHSNSQNQQSNASSTNTQNGVAVSSGPA) is disordered. Disordered regions lie at residues 1230 to 1259 (TPPQ…TQIP) and 1451 to 1472 (KEKF…DEQK). The span at 1245–1259 (VSGSSGSTKEETQIP) shows a compositional bias: polar residues. Residues 1456 to 1465 (SSPPTTPPSP) show a composition bias toward pro residues. N1588 carries an N-linked (GlcNAc...) asparagine glycan. 2 EGF-like domains span residues 1592 to 1632 (HQCV…VENP) and 1633 to 1680 (NPTC…IFCS). Cystine bridges form between C1594-C1605, C1599-C1615, C1617-C1628, C1636-C1649, C1643-C1663, and C1665-C1679. A lipid anchor (GPI-anchor amidated serine) is attached at S1680. The propeptide at 1681–1701 (SSNFLGISFLLILMLILYSFI) is removed in mature form.

In terms of assembly, forms a complex composed of subunits p83, p30, p38, and p42 which remain non-covalently associated; the complex is formed at the merozoite surface prior to egress from host erythrocytes. Forms a complex composed of processed MSP1 subunits, MSP6 subunit p36 and MSP7; the complex is formed at the merozoite surface prior to egress from host erythrocytes. Within the complex, interacts (via subunit p38) with MSP6 subunit p36 and (via subunits p83, p30 and p38) with MSP7 (via subunit p22). Forms a complex composed of MSP1, MSP6, DBLMSP1 and DBLMSP2. Within the complex, interacts (via subunit p38) with DBLMSP1 and DBLMSP2. Forms a complex composed of MSP1, and rhoptry proteins RhopH3, RAP1 and CLAG9/RhopH3. Within the complex, interacts (via subunits p42 and p19) with RhopH3 (via C-terminus). Forms a complex composed of MSP1, MSP6, MSP7, MSP9 and MSP3; within the complex, MSP6 and MSP9 mediate the binding to the host erythrocyte. Interacts (via subunits p19 and p42) with MSP9; the interaction is direct; MSP1 subunits p19 or p42, and MSP9 form a co-ligand complex that interacts with host SLC4A1/Band 3 protein. May interact with PFD6. Interacts with host spectrin. Interacts with host glycophorin GYPA in a sialic acid-independent manner. As to quaternary structure, interacts with host proinflammatory cytokine S100P; the interaction blocks S100P inflammatory and chemotactic activities. In terms of assembly, interacts with host SLC4A1/Band 3 (via 5ABC region) on the host erythrocyte surface in a sialic acid-independent manner. Post-translationally, the p190 precursor is cleaved by SUB1 prior to merozoite egress into 4 subunits p83, p30, p38, and p42 which remain non-covalently associated. SUB1-mediated proteolytic cleavage occurs in an orderly manner; the first cleavage occurs at the p30/p38 site, followed by cleavage at the p83/p30 site, the last cleavage occurs at the p38/p42 site. The order of cleavage is essential for parasite viability. SUB1-mediated processing is essential for merozoite egress. In a second processing step during erythrocyte invasion, p42 is cleaved by SUB2 into p33 and p19; the latter remains attached to the merozoite surface via its GPI-anchor and is endocytosed during the subsequent ring stage.

It is found in the cell membrane. Its subcellular location is the secreted. The protein resides in the vacuole membrane. In terms of biological role, during the asexual blood stage, involved in merozoite egress from host erythrocytes possibly via its interaction with the host cytoskeleton protein spectrin resulting in the destabilization of the host cytoskeleton and thus leading to erythrocyte cell membrane rupture. Involved in the binding to host erythrocytes and is required for host erythrocyte invasion. Its function is as follows. By binding to host proinflammatory cytokine S100P may interfere with host immune responses. Functionally, involved in merozoite invasion of host erythrocytes. May play a role in the biogenesis and/or function of the food vacuole during the intraerythrocytic development. This Plasmodium falciparum (isolate mad20 / Papua New Guinea) protein is Merozoite surface protein 1.